Here is a 181-residue protein sequence, read N- to C-terminus: GMP synthase [glutamine-hydrolyzing] subunit A (181 aa).

A Glutamine amidotransferase type-1 domain is found at 2–181; it reads KILVVNNYGQ…FDNFLEICRR (180 aa). The active-site Nucleophile is the Cys72. Active-site residues include His159 and Glu161.

As to quaternary structure, heterodimer composed of a glutamine amidotransferase subunit (A) and a GMP-binding subunit (B).

The enzyme catalyses XMP + L-glutamine + ATP + H2O = GMP + L-glutamate + AMP + diphosphate + 2 H(+). It functions in the pathway purine metabolism; GMP biosynthesis; GMP from XMP (L-Gln route): step 1/1. Functionally, catalyzes the synthesis of GMP from XMP. In Methanothrix thermoacetophila (strain DSM 6194 / JCM 14653 / NBRC 101360 / PT) (Methanosaeta thermophila), this protein is GMP synthase [glutamine-hydrolyzing] subunit A.